Consider the following 143-residue polypeptide: Large ribosomal subunit protein bL17 (143 aa).

Belongs to the bacterial ribosomal protein bL17 family. As to quaternary structure, part of the 50S ribosomal subunit. Contacts protein L32.

The protein is Large ribosomal subunit protein bL17 of Chelativorans sp. (strain BNC1).